The chain runs to 216 residues: Adenylate kinase (216 aa).

11–16 is a binding site for ATP; the sequence is GSGKGT. An NMP region spans residues 31 to 60; sequence ATGDLFRKAIERGDELGDTVKSYMERGELV. AMP contacts are provided by residues Thr-32, Arg-37, 58–60, 86–89, and Gln-93; these read ELV and GFPR. Residues 127–163 are LID; that stretch reads GRWVCRSCQSPYQCGCAEVAEGKCSRCQGELYQRPDD. Arg-128 is a binding site for ATP. 4 residues coordinate Zn(2+): Cys-131, Cys-134, Cys-150, and Cys-153. AMP contacts are provided by Arg-160 and Arg-171. Ala-199 is an ATP binding site.

It belongs to the adenylate kinase family. In terms of assembly, monomer.

It is found in the cytoplasm. It catalyses the reaction AMP + ATP = 2 ADP. The protein operates within purine metabolism; AMP biosynthesis via salvage pathway; AMP from ADP: step 1/1. In terms of biological role, catalyzes the reversible transfer of the terminal phosphate group between ATP and AMP. Plays an important role in cellular energy homeostasis and in adenine nucleotide metabolism. The sequence is that of Adenylate kinase from Dehalococcoides mccartyi (strain ATCC BAA-2266 / KCTC 15142 / 195) (Dehalococcoides ethenogenes (strain 195)).